Here is a 213-residue protein sequence, read N- to C-terminus: Imidazole glycerol phosphate synthase subunit HisH (213 aa).

The Glutamine amidotransferase type-1 domain maps to 8 to 213 (TVALIDYGAG…FLSRFLDWNP (206 aa)). Catalysis depends on Cys-91, which acts as the Nucleophile. Active-site residues include His-193 and Glu-195.

As to quaternary structure, heterodimer of HisH and HisF.

The protein localises to the cytoplasm. The catalysed reaction is 5-[(5-phospho-1-deoxy-D-ribulos-1-ylimino)methylamino]-1-(5-phospho-beta-D-ribosyl)imidazole-4-carboxamide + L-glutamine = D-erythro-1-(imidazol-4-yl)glycerol 3-phosphate + 5-amino-1-(5-phospho-beta-D-ribosyl)imidazole-4-carboxamide + L-glutamate + H(+). The enzyme catalyses L-glutamine + H2O = L-glutamate + NH4(+). Its pathway is amino-acid biosynthesis; L-histidine biosynthesis; L-histidine from 5-phospho-alpha-D-ribose 1-diphosphate: step 5/9. Functionally, IGPS catalyzes the conversion of PRFAR and glutamine to IGP, AICAR and glutamate. The HisH subunit catalyzes the hydrolysis of glutamine to glutamate and ammonia as part of the synthesis of IGP and AICAR. The resulting ammonia molecule is channeled to the active site of HisF. The chain is Imidazole glycerol phosphate synthase subunit HisH from Zymomonas mobilis subsp. mobilis (strain ATCC 31821 / ZM4 / CP4).